Reading from the N-terminus, the 219-residue chain is Elongation factor Ts (219 aa).

An involved in Mg(2+) ion dislocation from EF-Tu region spans residues 82–85 (TDFV).

The protein belongs to the EF-Ts family.

It localises to the cytoplasm. Its function is as follows. Associates with the EF-Tu.GDP complex and induces the exchange of GDP to GTP. It remains bound to the aminoacyl-tRNA.EF-Tu.GTP complex up to the GTP hydrolysis stage on the ribosome. The sequence is that of Elongation factor Ts from Anaeromyxobacter sp. (strain K).